The following is a 130-amino-acid chain: Small ribosomal subunit protein bS6 (130 aa).

Positions 96–130 (VTEASPMAKARDERDSRRSPSDDRIEEESAEENAE) are disordered. Over residues 104 to 118 (KARDERDSRRSPSDD) the composition is skewed to basic and acidic residues. A compositionally biased stretch (acidic residues) spans 119-130 (RIEEESAEENAE).

It belongs to the bacterial ribosomal protein bS6 family.

In terms of biological role, binds together with bS18 to 16S ribosomal RNA. The sequence is that of Small ribosomal subunit protein bS6 from Shewanella denitrificans (strain OS217 / ATCC BAA-1090 / DSM 15013).